We begin with the raw amino-acid sequence, 103 residues long: Histone H4 (103 aa).

Over residues 1–14 the composition is skewed to gly residues; it reads MSGRGKGGKGLGKG. A disordered region spans residues 1–20; sequence MSGRGKGGKGLGKGGAKRHR. Serine 2 carries the post-translational modification N-acetylserine. N6-acetyl-N6-methyllysine; alternate is present on residues lysine 6 and lysine 13. Lysine 17 is subject to N6-acetyllysine. A DNA-binding region spans residues 17 to 21; sequence KRHRK. Lysine 21 bears the N6-methyllysine mark.

It belongs to the histone H4 family. In terms of assembly, the nucleosome is a histone octamer containing two molecules each of H2A, H2B, H3 and H4 assembled in one H3-H4 heterotetramer and two H2A-H2B heterodimers. The octamer wraps approximately 147 bp of DNA.

The protein localises to the nucleus. It is found in the chromosome. Core component of nucleosome. Nucleosomes wrap and compact DNA into chromatin, limiting DNA accessibility to the cellular machineries which require DNA as a template. Histones thereby play a central role in transcription regulation, DNA repair, DNA replication and chromosomal stability. DNA accessibility is regulated via a complex set of post-translational modifications of histones, also called histone code, and nucleosome remodeling. This Ascaris suum (Pig roundworm) protein is Histone H4.